The sequence spans 309 residues: Methionyl-tRNA formyltransferase (309 aa).

112–115 serves as a coordination point for (6S)-5,6,7,8-tetrahydrofolate; sequence SLLP.

It belongs to the Fmt family.

The catalysed reaction is L-methionyl-tRNA(fMet) + (6R)-10-formyltetrahydrofolate = N-formyl-L-methionyl-tRNA(fMet) + (6S)-5,6,7,8-tetrahydrofolate + H(+). Attaches a formyl group to the free amino group of methionyl-tRNA(fMet). The formyl group appears to play a dual role in the initiator identity of N-formylmethionyl-tRNA by promoting its recognition by IF2 and preventing the misappropriation of this tRNA by the elongation apparatus. This is Methionyl-tRNA formyltransferase from Bartonella bacilliformis (strain ATCC 35685 / KC583 / Herrer 020/F12,63).